Reading from the N-terminus, the 385-residue chain is MNSYISLIFTLLFFTSAARSSSVSVETGSCVRYTTIYSSGSSEFTSTITPETPSSSSSTFVPISTHTSSATNTTSGQLSISSSSSTSSEYSSSSIPITTVSSSDSFIPSSSQTISASSSTTDNVIVSSSISSTVSSTPVSTIYSGTSGTTFVSSSTTYQVIPTQICDGVRGLEYAVYNYDLPSESTFCHPSNGYTEVSTFNKPAYFGSKDLKQSAPLFTGIFSSLDDIPTYSASDYLPAYPPNPEGMSSTSSSCKTIVYQFFFRVPATDNWSLFVKNVDDAFFGWFGDKAISGWSNVNYDAYAHWRIGAYGMGTFDLGYLEQDSFVPVRFVLANGAYIGGFDFAFNSSSTGPVRTTSYSYTSTCDKSFLPFGKGNGGLDEGTANV.

The first 20 residues, Met-1–Ser-20, serve as a signal peptide directing secretion. Residues Ser-41–Tyr-90 form a disordered region. N-linked (GlcNAc...) asparagine glycosylation is found at Asn-72, Asn-270, and Asn-346. One can recognise a PA14 domain in the interval Glu-196–Tyr-360.

Its subcellular location is the secreted. The protein resides in the cell surface. Its function is as follows. May be involved in agglutination during conjugation or other aspects of colony formation. Induces flocculation when overexpressed. This Schizosaccharomyces pombe (strain 972 / ATCC 24843) (Fission yeast) protein is Putative cell agglutination protein pfl8.